Reading from the N-terminus, the 398-residue chain is Meiosis-specific protein SPO11 (398 aa).

Positions 40-175 (CSNADVLAHI…LNIIPAQKGL (136 aa)) constitute a Topo IIA-type catalytic domain. Y135 (O-(5'-phospho-DNA)-tyrosine intermediate) is an active-site residue. 2 residues coordinate Mg(2+): E233 and D288.

The protein belongs to the TOP6A family. Requires Mg(2+) as cofactor.

The protein resides in the nucleus. Its subcellular location is the chromosome. It catalyses the reaction ATP-dependent breakage, passage and rejoining of double-stranded DNA.. In terms of biological role, required for meiotic recombination. Mediates DNA cleavage that forms the double-strand breaks (DSB) that initiate meiotic recombination. The action of SPO11 is important in setting off a regulatory chain of events encompassing 5' to 3' resection. When there are no SPO11-DSBs, resection of a site specific VDE-DSB takes place but it is faster than in wild-type meiosis and increases the risk of uncovering flanking homology. The sequence is that of Meiosis-specific protein SPO11 (SPO11) from Saccharomyces cerevisiae (strain ATCC 204508 / S288c) (Baker's yeast).